The chain runs to 512 residues: MDIIFEQALFPLFCFVLSFFIIFFTTTRPRSSRKVVPSPPGPPRLPIIGNIHLVGRNPHHSFADLSKTYGPIMSLKFGSLNTVVVTSPEAAREVLRTYDQILSSRTPTNSIRSINHDKVSVVWLPPSSSRWRLLRKLSATQLFSPQRIEATKTLRENKVKELVSFMSESSEREEAVDISRATFITALNIISNILFSVDLGNYDSNKSGVFQDTVIGVMEAVGNPDAANFFPFLGFLDLQGNRKTLKACSERLFKVFRGFIDAKLAEKSLRDTNSKDVRERDFVDVLLDLTEGDEAELNTNDIVHLLLDLFGAGTDTNSSTVEWAMAELLRNPETMVKAQAEIDCVIGQKGVVEESDISALPYLQAVVKETFRLHPAAPLLVPRKAESDVEVLGFMVPKDTQVFVNVWAIGRDPNVWENSSRFKPERFLGKDIDLRGRDYELTPFGAGRRICPGLPLAVKTVPLMLASLLYSFDWKLPNGVGSEDLDMDETFGLTLHKTNPLHAVPVKKRGRN.

The chain crosses the membrane as a helical span at residues 3-23; the sequence is IIFEQALFPLFCFVLSFFIIF. Residue C451 participates in heme binding.

This sequence belongs to the cytochrome P450 family. The cofactor is heme.

The protein resides in the membrane. The polypeptide is Cytochrome P450 76C2 (CYP76C2) (Arabidopsis thaliana (Mouse-ear cress)).